The chain runs to 152 residues: Transcriptional regulator MraZ (152 aa).

SpoVT-AbrB domains follow at residues 5-52 (ANAI…PLNE) and 81-124 (ATES…DEDM).

It belongs to the MraZ family. In terms of assembly, forms oligomers.

It is found in the cytoplasm. Its subcellular location is the nucleoid. The chain is Transcriptional regulator MraZ from Psychromonas ingrahamii (strain DSM 17664 / CCUG 51855 / 37).